The sequence spans 222 residues: Adenylate kinase (222 aa).

A propeptide (removed in mature form) is located at residue S2. An N-acetylserine mark is found at S2 and S3. Position 16-21 (16-21 (GAGKGT)) interacts with ATP. Residues 36-65 (ATGDMLRSQIAKGTQLGLEAKKIMDQGGLV) form an NMP region. Residues T37, R42, 63–65 (GLV), 92–95 (GFPR), and Q99 contribute to the AMP site. Residues 133–170 (GRLIHPASGRSYHKIFNPPKEDMKDDVTGEALVQRSDD) are LID. ATP is bound by residues R134 and 143 to 144 (SY). AMP contacts are provided by R167 and R178. Q206 serves as a coordination point for ATP.

The protein belongs to the adenylate kinase family. AK2 subfamily. In terms of assembly, monomer.

The protein localises to the cytoplasm. Its subcellular location is the cytosol. It localises to the mitochondrion intermembrane space. It carries out the reaction AMP + ATP = 2 ADP. Functionally, catalyzes the reversible transfer of the terminal phosphate group between ATP and AMP. Plays an important role in cellular energy homeostasis and in adenine nucleotide metabolism. Adenylate kinase activity is critical for regulation of the phosphate utilization and the AMP de novo biosynthesis pathways. This chain is Adenylate kinase, found in Saccharomyces cerevisiae (strain YJM789) (Baker's yeast).